The chain runs to 1051 residues: Eukaryotic translation initiation factor 3 subunit A (1051 aa).

Positions 92-121 (LKKFIELAEKKVTEAQAKADEIQSSLESAA) form a coiled coil. In terms of domain architecture, PCI spans 339–523 (MTKAASFVLL…GVLTFDTDIF (185 aa)). The stretch at 608–905 (RVLIEKKKEA…EAEARRAARK (298 aa)) forms a coiled coil. Basic and acidic residues-rich tracts occupy residues 617–632 (AATD…EETR), 642–664 (EAEK…RDEQ), 794–901 (KEVS…EARR), and 916–926 (AELERPVERTA). Disordered stretches follow at residues 617–664 (AATD…RDEQ) and 794–1051 (KEVS…QQQQ). 2 stretches are compositionally biased toward low complexity: residues 948–961 (KEAA…AAAE) and 1010–1039 (SSSS…SPAP).

The protein belongs to the eIF-3 subunit A family. As to quaternary structure, component of the eukaryotic translation initiation factor 3 (eIF-3) complex.

It localises to the cytoplasm. RNA-binding component of the eukaryotic translation initiation factor 3 (eIF-3) complex, which is involved in protein synthesis of a specialized repertoire of mRNAs and, together with other initiation factors, stimulates binding of mRNA and methionyl-tRNAi to the 40S ribosome. The eIF-3 complex specifically targets and initiates translation of a subset of mRNAs involved in cell proliferation. The polypeptide is Eukaryotic translation initiation factor 3 subunit A (tif32) (Aspergillus fumigatus (strain CBS 144.89 / FGSC A1163 / CEA10) (Neosartorya fumigata)).